The primary structure comprises 359 residues: UDP-2-acetamido-2-deoxy-3-oxo-D-glucuronate aminotransferase (359 aa).

UDP-2-acetamido-2-deoxy-alpha-D-ribo-hex-3-uluronate contacts are provided by G29, Y31, and S184. K185 carries the N6-(pyridoxal phosphate)lysine modification. UDP-2-acetamido-2-deoxy-alpha-D-ribo-hex-3-uluronate is bound by residues R229, H308, and Y309.

This sequence belongs to the DegT/DnrJ/EryC1 family. In terms of assembly, homodimer. Pyridoxal 5'-phosphate serves as cofactor.

It catalyses the reaction UDP-2-acetamido-2-deoxy-alpha-D-ribo-hex-3-uluronate + L-glutamate = UDP-2-acetamido-3-amino-2,3-dideoxy-alpha-D-glucuronate + 2-oxoglutarate. The protein operates within bacterial outer membrane biogenesis; LPS O-antigen biosynthesis. Plays a role in the biosynthesis of B-band O antigen for serotype O5. Catalyzes the amination of UDP-2-acetamido-2-deoxy-3-oxo-D-glucuronic acid (UDP-3-oxo-D-GlcNAcA) to UDP-2-acetamido-3-amino-2,3-dideoxy-D-glucuronic acid (UDP-GlcNAc3NA), using L-glutamate as the preferred amine donor. The polypeptide is UDP-2-acetamido-2-deoxy-3-oxo-D-glucuronate aminotransferase (Pseudomonas aeruginosa (strain ATCC 15692 / DSM 22644 / CIP 104116 / JCM 14847 / LMG 12228 / 1C / PRS 101 / PAO1)).